The primary structure comprises 319 residues: GCN5-related N-acetyltransferase 5, chloroplastic (319 aa).

The N-terminal 55 residues, Met1 to Ser55, are a transit peptide targeting the chloroplast. The 189-residue stretch at Met109–Pro297 folds into the N-acetyltransferase domain. Residues Met218–Val220, Arg226–Trp231, Asp258–Ala260, and Tyr265 each bind acetyl-CoA. Catalysis depends on Tyr265, which acts as the Proton donor.

The protein belongs to the acetyltransferase family. GNAT subfamily. As to quaternary structure, oligomer. In terms of processing, autoacetylated. As to expression, expressed in green tissues.

Its subcellular location is the plastid. It localises to the chloroplast. It carries out the reaction an N-terminal L-alpha-aminoacyl-[protein] + acetyl-CoA = N-terminal N(alpha)-acetyl-L-alpha-aminoacyl-[protein] + CoA + H(+). The enzyme catalyses L-lysyl-[protein] + acetyl-CoA = N(6)-acetyl-L-lysyl-[protein] + CoA + H(+). The catalysed reaction is N-terminal L-alanyl-[protein] + acetyl-CoA = N-terminal N(alpha)-acetyl-L-alanyl-[protein] + CoA + H(+). It catalyses the reaction N-terminal L-seryl-[protein] + acetyl-CoA = N-terminal N(alpha)-acetyl-L-seryl-[protein] + CoA + H(+). It carries out the reaction N-terminal L-methionyl-[protein] + acetyl-CoA = N-terminal N(alpha)-acetyl-L-methionyl-[protein] + CoA + H(+). The enzyme catalyses N-terminal L-valyl-[protein] + acetyl-CoA = N-terminal N(alpha)-acetyl-L-valyl-[protein] + CoA + H(+). The catalysed reaction is N-terminal L-threonyl-[protein] + acetyl-CoA = N-terminal N(alpha)-acetyl-L-threonyl-[protein] + CoA + H(+). Its function is as follows. Protein acetyltransferase with dual specificity triggering both N-alpha-acetylation (NTA), with a large spectrum of modified N-termini, including methionine, alanine, serine and to a lower extent threonine and valine as substrates, and epsilon-lysine acetylation (KA). The chain is GCN5-related N-acetyltransferase 5, chloroplastic from Arabidopsis thaliana (Mouse-ear cress).